Consider the following 398-residue polypeptide: Type III polyketide synthase pspB (398 aa).

Residues lysine 47 and 47–54 contribute to the CoA site; that span reads KLLQINRS. Residue cysteine 152 is the Nucleophile of the active site. A substrate-binding site is contributed by 214–215; the sequence is SD. Residues leucine 267, glycine 321, 321-324, and alanine 324 each bind CoA; that span reads GGEA.

Belongs to the thiolase-like superfamily. Chalcone/stilbene synthases family. Homodimer.

The enzyme catalyses 11 malonyl-CoA + acetyl-CoA + S-adenosyl-L-methionine + 12 NADPH + 22 H(+) = soppiline B + S-adenosyl-L-homocysteine + 12 CO2 + 12 NADP(+) + 12 CoA + 8 H2O. Its pathway is secondary metabolite biosynthesis. Functionally, type III polyketide synthase; part of the gene cluster that mediates the biosynthesis of the alkylresorcinols called soppilines. The biosynthesis starts with the HR-PKS pspA-catalyzed carbon chain assembly through nine chain elongation cycles, using acetyl CoA and malonyl CoA as a starter and extender units, respectively, to produce the polyketide soppiline A. In the first round, the KR, DH, and CMeT domains work to produce 2-methyl-2-butenyl thioester. In rounds 2 to 5, the KR, DH, and ER domains fully catalyze the reduction of the elongated beta-ketothioester, resulting in the insertion of eight methylene units. The unusual Z,E,Z-triene motif is likely constructed during rounds 6 to 8. Typically, the DH domain introduces a double bond at an alpha,beta-position of an elongated polyketide chain, with the dehydration of a beta-hydroxy group. The last extension cycle would be carried out with L-oriented beta-ketoreduction by the KR domain to produce beta-hydroxy carboxylic acid soppiline A. The type III PKS pspB intercepts the elongated polyketide chain at round 8 from the HR-PKS pspA, followed by a tri-keto extension and decarboxylative aldol cyclization to produce 1,3,5-trisubstituted alkylresorcinol soppiline B. Subsequently, the cytochrome P450 monooxygenase pspC catalyzes three-step oxidations at the C-4 methyl group to carboxylic acid to yield soppiline C. The sequence is that of Type III polyketide synthase pspB from Penicillium soppii.